An 838-amino-acid chain; its full sequence is V-type proton ATPase 116 kDa subunit a 1 (838 aa).

At 1–388 (MGELFRSEEM…DAYGIGTYRE (388 aa)) the chain is on the cytoplasmic side. Residues 389–407 (INPAPYTIITFPFLFAVMF) traverse the membrane as a helical segment. Residues 408 to 409 (GD) are Vacuolar-facing. The chain crosses the membrane as a helical span at residues 410-426 (FGHGILMTLIAIWMVLR). Residues 427 to 441 (ESRILSQKSDNEMFS) are Cytoplasmic-facing. The helical transmembrane segment at 442-471 (TVFSGRYIILLMGLFSTYTGLIYNDCFSKS) threads the bilayer. The Vacuolar segment spans residues 472 to 535 (LNMFGSSWSV…ANNKLAFLNS (64 aa)). A helical membrane pass occupies residues 536–555 (FKMKMSVILGIIHMLFGVML). At 556-573 (SLLNHIYFKKPLNIYLGF) the chain is on the cytoplasmic side. A helical transmembrane segment spans residues 574–594 (IPEMIFMSSLFGYLVILIFYK). At 595–639 (WTAYDAHTSKEAPSPLIHFINMFLFSYGDTSNKMLYRGQKGIQCF) the chain is on the vacuolar side. Residues 640–659 (LVVVALLCVPWMLVAKPLVL) traverse the membrane as a helical segment. Residues 660–725 (RHQYLRRKHL…DTVVYQAIHT (66 aa)) are Cytoplasmic-facing. A helical membrane pass occupies residues 726–750 (IEYCLGCISNTASYLRLWALSLAHA). Topologically, residues 751–771 (QLSEVLWTMVIHTGLSVRSLA) are vacuolar. The chain crosses the membrane as a helical span at residues 772 to 810 (GGFGLVFIFAAFATLTVAILLVMEGLSAFLHALRLHWIE). The Cytoplasmic portion of the chain corresponds to 811 to 838 (FQNKFYTGTGFKFLPFSFDPIREGKFDD).

It belongs to the V-ATPase 116 kDa subunit family. As to quaternary structure, V-ATPase is a heteromultimeric enzyme made up of two complexes: the ATP-hydrolytic V1 complex and the proton translocation V0 complex. The V1 complex consists of three catalytic AB heterodimers that form a heterohexamer, three peripheral stalks each consisting of EG heterodimers, one central rotor including subunits D and F, and the regulatory subunits C and H. The proton translocation complex V0 consists of the proton transport subunit a, a ring of proteolipid subunits c9c'', rotary subunit d, subunits e and f, and two accessory subunits. As to expression, detected in brain (at protein level). Highest expression in brain, intermediate levels in kidney, and relatively low levels in bone and liver.

It is found in the cytoplasmic vesicle. Its subcellular location is the clathrin-coated vesicle membrane. The protein localises to the secretory vesicle. The protein resides in the synaptic vesicle membrane. It localises to the melanosome. Its function is as follows. Subunit of the V0 complex of vacuolar(H+)-ATPase (V-ATPase), a multisubunit enzyme composed of a peripheral complex (V1) that hydrolyzes ATP and a membrane integral complex (V0) that translocates protons. V-ATPase is responsible for acidifying and maintaining the pH of intracellular compartments and in some cell types, is targeted to the plasma membrane, where it is responsible for acidifying the extracellular environment. Required for assembly and activity of the vacuolar ATPase. The sequence is that of V-type proton ATPase 116 kDa subunit a 1 (ATP6V0A1) from Gallus gallus (Chicken).